The sequence spans 307 residues: Ornithine carbamoyltransferase (307 aa).

Residues 50–53 (STRT), Gln77, Arg101, and 128–131 (HPCQ) contribute to the carbamoyl phosphate site. L-ornithine-binding positions include Asn160, Asp224, and 228–229 (SM). Carbamoyl phosphate contacts are provided by residues 264–265 (CL) and Arg292.

Belongs to the aspartate/ornithine carbamoyltransferase superfamily. OTCase family.

The protein localises to the cytoplasm. It catalyses the reaction carbamoyl phosphate + L-ornithine = L-citrulline + phosphate + H(+). It functions in the pathway amino-acid biosynthesis; L-arginine biosynthesis; L-arginine from L-ornithine and carbamoyl phosphate: step 1/3. With respect to regulation, inhibited by arginine, norvaline. Reversibly catalyzes the transfer of the carbamoyl group from carbamoyl phosphate (CP) to the N(epsilon) atom of ornithine (ORN) to produce L-citrulline, which is a substrate for argininosuccinate synthetase, the enzyme involved in the final step in arginine biosynthesis. This is Ornithine carbamoyltransferase from Mycolicibacterium smegmatis (strain ATCC 700084 / mc(2)155) (Mycobacterium smegmatis).